We begin with the raw amino-acid sequence, 502 residues long: Probable malate:quinone oxidoreductase (502 aa).

Belongs to the MQO family. FAD serves as cofactor.

It carries out the reaction (S)-malate + a quinone = a quinol + oxaloacetate. Its pathway is carbohydrate metabolism; tricarboxylic acid cycle; oxaloacetate from (S)-malate (quinone route): step 1/1. The chain is Probable malate:quinone oxidoreductase from Oceanobacillus iheyensis (strain DSM 14371 / CIP 107618 / JCM 11309 / KCTC 3954 / HTE831).